A 212-amino-acid chain; its full sequence is Octanoyltransferase (212 aa).

Positions 34–208 (GQRQDTLILL…AFERQFNARC (175 aa)) constitute a BPL/LPL catalytic domain. Substrate-binding positions include 72-79 (RGGQVTYH), 139-141 (SIG), and 152-154 (GLS). C170 serves as the catalytic Acyl-thioester intermediate.

The protein belongs to the LipB family.

It is found in the cytoplasm. The enzyme catalyses octanoyl-[ACP] + L-lysyl-[protein] = N(6)-octanoyl-L-lysyl-[protein] + holo-[ACP] + H(+). It functions in the pathway protein modification; protein lipoylation via endogenous pathway; protein N(6)-(lipoyl)lysine from octanoyl-[acyl-carrier-protein]: step 1/2. In terms of biological role, catalyzes the transfer of endogenously produced octanoic acid from octanoyl-acyl-carrier-protein onto the lipoyl domains of lipoate-dependent enzymes. Lipoyl-ACP can also act as a substrate although octanoyl-ACP is likely to be the physiological substrate. The sequence is that of Octanoyltransferase from Magnetococcus marinus (strain ATCC BAA-1437 / JCM 17883 / MC-1).